An 89-amino-acid polypeptide reads, in one-letter code: Small ribosomal subunit protein uS15 (89 aa).

This sequence belongs to the universal ribosomal protein uS15 family. In terms of assembly, part of the 30S ribosomal subunit. Forms a bridge to the 50S subunit in the 70S ribosome, contacting the 23S rRNA.

One of the primary rRNA binding proteins, it binds directly to 16S rRNA where it helps nucleate assembly of the platform of the 30S subunit by binding and bridging several RNA helices of the 16S rRNA. Functionally, forms an intersubunit bridge (bridge B4) with the 23S rRNA of the 50S subunit in the ribosome. This Oenococcus oeni (strain ATCC BAA-331 / PSU-1) protein is Small ribosomal subunit protein uS15.